The following is a 603-amino-acid chain: Methionine--tRNA ligase (603 aa).

Residues 14–24 carry the 'HIGH' region motif; that stretch reads PYANGPRHIGH. Zn(2+)-binding residues include C146, C149, C159, and C162. Residues 354–358 carry the 'KMSKS' region motif; the sequence is KFSSS. S357 is a binding site for ATP.

The protein belongs to the class-I aminoacyl-tRNA synthetase family. MetG type 1 subfamily. In terms of assembly, monomer. Zn(2+) is required as a cofactor.

It localises to the cytoplasm. The catalysed reaction is tRNA(Met) + L-methionine + ATP = L-methionyl-tRNA(Met) + AMP + diphosphate. In terms of biological role, is required not only for elongation of protein synthesis but also for the initiation of all mRNA translation through initiator tRNA(fMet) aminoacylation. The polypeptide is Methionine--tRNA ligase (Salinispora tropica (strain ATCC BAA-916 / DSM 44818 / JCM 13857 / NBRC 105044 / CNB-440)).